The primary structure comprises 621 residues: MMKSFFSAAALLLGLVAPSAVLAAPSLPGVPREVTRDLLRPVEERQSSCHTAANRACWAPGFDINTDYEVSTPNTGVTRTYTLTLTEVDNWLGPDGVVKQKVMLVNGDIFGPTITANWGDWIQVNVINNLRTNGTSIHWHGLHQKGTNMHDGANGVTECPIPPKGGSRIYRFRAQQYGTSWYHSHFSAQYGNGVVGTIVVNGPASVPYDIDLGVFPITDYYHKPADVLVEETMNGGPPPSDTVLFKGHGKNPQTGAGKFANVTLTPGKRHRLRIINTSTHDHFQLKLQNHTMTIIAADMVPVQAQTVDSLFLAVGQRYDVTIDANKSVGNYWFNATFGGGLACGASLNPHPAAVFRYQGAPNTLPTNIGTPAADANCMDLNNLTPVVSRSVPTSGFTPRPNNTLPVSLTLGGTPLFVWKVNGSSINVDWDKPIVDYVIAQNTSYPPQANVITVNSVNQWTYWLIENDPTGPFSIPHPMHLHGHDFLVVGRSPDQPAGVPQTRYRFNPATDMALLKSSNPVRRDVAMLPANGWLLIAFKSDNPGAWLFHCHIAWHVSGGLSVQYLERPNDLRNGFSQADKNQHNNNCNAWRAYWPTNPFPKIDSGLKVKKWVGEHPDWYIKN.

The N-terminal stretch at 1–23 (MMKSFFSAAALLLGLVAPSAVLA) is a signal peptide. Residues 24–48 (APSLPGVPREVTRDLLRPVEERQSS) constitute a propeptide that is removed on maturation. A disulfide bridge connects residues cysteine 49 and cysteine 57. 2 consecutive Plastocyanin-like domains span residues 78–201 (TRTY…IVVN) and 210–367 (IDLG…LPTN). Residue asparagine 133 is glycosylated (N-linked (GlcNAc...) asparagine). 4 residues coordinate Cu cation: histidine 138, histidine 140, histidine 183, and histidine 185. 2 disulfides stabilise this stretch: cysteine 159-cysteine 586 and cysteine 343-cysteine 377. N-linked (GlcNAc...) asparagine glycosylation is found at asparagine 261, asparagine 276, asparagine 289, asparagine 325, and asparagine 334. Residues asparagine 401, asparagine 421, and asparagine 441 are each glycosylated (N-linked (GlcNAc...) asparagine). The 137-residue stretch at 430-566 (DKPIVDYVIA…GGLSVQYLER (137 aa)) folds into the Plastocyanin-like 3 domain. Histidine 476, histidine 479, histidine 481, histidine 548, cysteine 549, histidine 550, and histidine 554 together coordinate Cu cation. The propeptide occupies 606–621 (KVKKWVGEHPDWYIKN).

The protein belongs to the multicopper oxidase family. As to quaternary structure, monomer. Cu cation is required as a cofactor. In terms of processing, proteolytically processed at both its N-terminus and its C-terminus.

It is found in the secreted. The catalysed reaction is 4 hydroquinone + O2 = 4 benzosemiquinone + 2 H2O. Its function is as follows. Probably involved in lignin degradation and in the detoxification of lignin-derived products in its natural habitat (herbivorous dung), which is rich in lignin of grasses and straw. Probably involved in melanin synthesis and in perithecia development. The sequence is that of Laccase-2 (LAC2) from Podospora anserina (Pleurage anserina).